A 1199-amino-acid chain; its full sequence is Nucleolar protein 6 (1199 aa).

The segment covering 1–10 has biased composition (basic residues); the sequence is MLRNKRKAGK. Disordered regions lie at residues 1-51 and 1146-1199; these read MLRN…EPKP and KREQ…KALK. Basic and acidic residues-rich tracts occupy residues 28 to 37 and 1146 to 1169; these read HAEDHSDLEH and KREQ…EKST.

It belongs to the NRAP family. As to quaternary structure, part of the small subunit (SSU) processome, composed of more than 70 proteins and the RNA chaperone small nucleolar RNA (snoRNA) U3.

It is found in the nucleus. The protein resides in the nucleolus. It localises to the chromosome. Part of the small subunit (SSU) processome, first precursor of the small eukaryotic ribosomal subunit. During the assembly of the SSU processome in the nucleolus, many ribosome biogenesis factors, an RNA chaperone and ribosomal proteins associate with the nascent pre-rRNA and work in concert to generate RNA folding, modifications, rearrangements and cleavage as well as targeted degradation of pre-ribosomal RNA by the RNA exosome. In Drosophila yakuba (Fruit fly), this protein is Nucleolar protein 6.